Here is a 423-residue protein sequence, read N- to C-terminus: Histidine--tRNA ligase (423 aa).

The protein belongs to the class-II aminoacyl-tRNA synthetase family. Homodimer.

Its subcellular location is the cytoplasm. The enzyme catalyses tRNA(His) + L-histidine + ATP = L-histidyl-tRNA(His) + AMP + diphosphate + H(+). This Anoxybacillus flavithermus (strain DSM 21510 / WK1) protein is Histidine--tRNA ligase.